The following is a 378-amino-acid chain: Erythronate-4-phosphate dehydrogenase (378 aa).

Residues Ser45 and Thr66 each coordinate substrate. Positions 146 and 175 each coordinate NAD(+). The active site involves Arg208. Asp232 contributes to the NAD(+) binding site. Glu237 is an active-site residue. The Proton donor role is filled by His254. NAD(+) is bound at residue Gly257. Tyr258 is a binding site for substrate.

This sequence belongs to the D-isomer specific 2-hydroxyacid dehydrogenase family. PdxB subfamily. In terms of assembly, homodimer.

It is found in the cytoplasm. The enzyme catalyses 4-phospho-D-erythronate + NAD(+) = (R)-3-hydroxy-2-oxo-4-phosphooxybutanoate + NADH + H(+). It participates in cofactor biosynthesis; pyridoxine 5'-phosphate biosynthesis; pyridoxine 5'-phosphate from D-erythrose 4-phosphate: step 2/5. In terms of biological role, catalyzes the oxidation of erythronate-4-phosphate to 3-hydroxy-2-oxo-4-phosphonooxybutanoate. This chain is Erythronate-4-phosphate dehydrogenase, found in Cronobacter sakazakii (strain ATCC BAA-894) (Enterobacter sakazakii).